The following is a 164-amino-acid chain: CDP-archaeol synthase (164 aa).

4 helical membrane-spanning segments follow: residues 3–23 (LLYF…AVLA), 51–71 (YEGF…PNLL), 77–97 (LLDA…GAFI), and 122–142 (LAVY…AVII).

It belongs to the CDP-archaeol synthase family. It depends on Mg(2+) as a cofactor.

The protein localises to the cell membrane. The enzyme catalyses 2,3-bis-O-(geranylgeranyl)-sn-glycerol 1-phosphate + CTP + H(+) = CDP-2,3-bis-O-(geranylgeranyl)-sn-glycerol + diphosphate. Its pathway is membrane lipid metabolism; glycerophospholipid metabolism. Its function is as follows. Catalyzes the formation of CDP-2,3-bis-(O-geranylgeranyl)-sn-glycerol (CDP-archaeol) from 2,3-bis-(O-geranylgeranyl)-sn-glycerol 1-phosphate (DGGGP) and CTP. This reaction is the third ether-bond-formation step in the biosynthesis of archaeal membrane lipids. This Pyrobaculum islandicum (strain DSM 4184 / JCM 9189 / GEO3) protein is CDP-archaeol synthase.